A 441-amino-acid polypeptide reads, in one-letter code: MQRFYVVKEVLSDKLKRVYEFTVGNEYLEQQVDDRLREIAANVRMDGFRKGKVSLDLVRRNCGEDVVREVLSKVVDDASSQFMQEGGFGDVVTSEVRITSHPKVCSTEGKGGDLVYELQFELMPEVPSINPEEIALKEMEAEIGQEDVDKFIGELKTRYPNFVASDSPKQRAAAGDKVVIDYNSSFKGKALRGGSAKGFVAVLGGGHLPKEFEDKITGMKVGDVKEFKLGFPSDYRVRLFAGKEVEMSVKLVSIMVPKDVGDHEELAKSCGFGCAEDMVNFATESLKGRFAFMSDALMRKELFDHMETIYQGQVPESVVSQESARIRRELAPSELEAMGEDGILKEAERRVRLGMLLMKVSQDNNIAVEARDISAFVQSNYLNYGASLESVLKLLRSNQGVRDHIRGKVLEDKVVRYMVAKAKKERQNVPAGDLKSLFESI.

The PPIase FKBP-type domain occupies 175–260; sequence GDKVVIDYNS…LVSIMVPKDV (86 aa).

Belongs to the FKBP-type PPIase family. Tig subfamily.

It is found in the cytoplasm. It catalyses the reaction [protein]-peptidylproline (omega=180) = [protein]-peptidylproline (omega=0). Involved in protein export. Acts as a chaperone by maintaining the newly synthesized protein in an open conformation. Functions as a peptidyl-prolyl cis-trans isomerase. In Anaplasma marginale (strain St. Maries), this protein is Trigger factor.